A 167-amino-acid polypeptide reads, in one-letter code: Small ribosomal subunit protein uS5 (167 aa).

Positions 12–75 (LQEKLIAVNR…EKARRNMVTV (64 aa)) constitute an S5 DRBM domain.

Belongs to the universal ribosomal protein uS5 family. Part of the 30S ribosomal subunit. Contacts proteins S4 and S8.

With S4 and S12 plays an important role in translational accuracy. In terms of biological role, located at the back of the 30S subunit body where it stabilizes the conformation of the head with respect to the body. The protein is Small ribosomal subunit protein uS5 of Shewanella denitrificans (strain OS217 / ATCC BAA-1090 / DSM 15013).